The chain runs to 414 residues: Histidine--tRNA ligase (414 aa).

It belongs to the class-II aminoacyl-tRNA synthetase family. As to quaternary structure, homodimer.

It is found in the cytoplasm. The catalysed reaction is tRNA(His) + L-histidine + ATP = L-histidyl-tRNA(His) + AMP + diphosphate + H(+). This is Histidine--tRNA ligase from Rickettsia conorii (strain ATCC VR-613 / Malish 7).